A 474-amino-acid chain; its full sequence is Aspartate ammonia-lyase (474 aa).

Residues Thr-105, Ser-144, Thr-145, Asn-146, and Thr-191 each coordinate L-aspartate. Residues 322–331 form an SS loop region; that stretch reads GSSIMPGKVN. Residue Ser-323 is the Proton acceptor of the active site. Residues Ser-324 and Lys-329 each contribute to the L-aspartate site.

Belongs to the class-II fumarase/aspartase family. Aspartase subfamily. As to quaternary structure, homotetramer.

The catalysed reaction is L-aspartate = fumarate + NH4(+). In terms of biological role, lyase involved in the degradation of canavanine, the delta-oxa-analog of arginine, allowing growth on canavanine as sole nitrogen and carbon source. Probably catalyzes the conversion of L-aspartate to fumarate and ammonia. The protein is Aspartate ammonia-lyase of Pseudomonas canavaninivorans.